The chain runs to 85 residues: RNA-binding protein Hfq (85 aa).

Positions 10-70 constitute a Sm domain; the sequence is DIFLNGARKN…ISTINPAKPL (61 aa).

It belongs to the Hfq family. As to quaternary structure, homohexamer.

In terms of biological role, RNA chaperone that binds small regulatory RNA (sRNAs) and mRNAs to facilitate mRNA translational regulation in response to envelope stress, environmental stress and changes in metabolite concentrations. Also binds with high specificity to tRNAs. This chain is RNA-binding protein Hfq, found in Clostridium botulinum (strain 657 / Type Ba4).